The sequence spans 140 residues: Putative pre-16S rRNA nuclease (140 aa).

This sequence belongs to the YqgF nuclease family.

The protein resides in the cytoplasm. In terms of biological role, could be a nuclease involved in processing of the 5'-end of pre-16S rRNA. The chain is Putative pre-16S rRNA nuclease from Yersinia enterocolitica serotype O:8 / biotype 1B (strain NCTC 13174 / 8081).